A 763-amino-acid chain; its full sequence is Protein translocase subunit SecA 2 (763 aa).

ATP contacts are provided by residues glutamine 83, 101–105, and aspartate 490; that span reads GEGKT.

The protein belongs to the SecA family. Monomer and homodimer. Part of the essential Sec protein translocation apparatus which comprises SecA, SecYEG and auxiliary proteins SecDF. Other proteins may also be involved.

It localises to the cell membrane. It is found in the cytoplasm. The enzyme catalyses ATP + H2O + cellular proteinSide 1 = ADP + phosphate + cellular proteinSide 2.. Its function is as follows. Part of the Sec protein translocase complex. Interacts with the SecYEG preprotein conducting channel. Has a central role in coupling the hydrolysis of ATP to the transfer of proteins into and across the cell membrane, serving as an ATP-driven molecular motor driving the stepwise translocation of polypeptide chains across the membrane. The protein is Protein translocase subunit SecA 2 of Corynebacterium glutamicum (strain R).